The primary structure comprises 361 residues: Mannose-1-phosphate guanyltransferase 2 (361 aa).

This sequence belongs to the transferase hexapeptide repeat family.

The protein localises to the cytoplasm. The enzyme catalyses alpha-D-mannose 1-phosphate + GTP + H(+) = GDP-alpha-D-mannose + diphosphate. It participates in nucleotide-sugar biosynthesis; GDP-alpha-D-mannose biosynthesis; GDP-alpha-D-mannose from alpha-D-mannose 1-phosphate (GTP route): step 1/1. Involved in cell wall synthesis where it is required for glycosylation. Involved in cell cycle progression through cell-size checkpoint. The polypeptide is Mannose-1-phosphate guanyltransferase 2 (MPG1) (Candida glabrata (strain ATCC 2001 / BCRC 20586 / JCM 3761 / NBRC 0622 / NRRL Y-65 / CBS 138) (Yeast)).